A 459-amino-acid polypeptide reads, in one-letter code: MTAEEMKATESGAQSAPLPMEGVDISPKQDEGVLKVIKREGTGTEMPMIGDRVFVHYTGWLLDGTKFDSSLDRKDKFSFDLGKGEVIKAWDIAIATMKVGEVCHITCKPEYAYGSAGSPPKIPPNATLVFEVELFEFKGEDLTEEEDGGIIRRIQTRGEGYAKPNEGAIVEVALEGYYKDKLFDQRELRFEIGEGENLDLPYGLERAIQRMEKGEHSIVYLKPSYAFGSVGKEKFQIPPNAELKYELHLKSFEKAKESWEMNSEEKLEQSTIVKERGTVYFKEGKYKQALLQYKKIVSWLEYESSFSNEEAQKAQALRLASHLNLAMCHLKLQAFSAAIESCNKALELDSNNEKGLFRRGEAHLAVNDFELARADFQKVLQLYPNNKAAKTQLAVCQQRIRRQLAREKKLYANMFERLAEEENKAKAEASSGDHPTDTEMKEEQKSNTAGSQSQVETEA.

N-acetylmethionine; in peptidyl-prolyl cis-trans isomerase FKBP4; alternate is present on methionine 1. The tract at residues 1 to 24 is disordered; it reads MTAEEMKATESGAQSAPLPMEGVD. Threonine 2 is subject to N-acetylthreonine; in peptidyl-prolyl cis-trans isomerase FKBP4, N-terminally processed; partial. The PPIase FKBP-type 1 domain occupies 50-138; the sequence is GDRVFVHYTG…VFEVELFEFK (89 aa). Residue threonine 143 is modified to Phosphothreonine; by CK2. The 87-residue stretch at 167–253 folds into the PPIase FKBP-type 2 domain; it reads GAIVEVALEG…KYELHLKSFE (87 aa). Tyrosine 220 is modified (phosphotyrosine). Positions 267 to 400 are interaction with tubulin; sequence LEQSTIVKER…TQLAVCQQRI (134 aa). TPR repeat units follow at residues 270–303, 319–352, and 353–386; these read STIVKERGTVYFKEGKYKQALLQYKKIVSWLEYE, LASHLNLAMCHLKLQAFSAAIESCNKALELDSNN, and EKGLFRRGEAHLAVNDFELARADFQKVLQLYPNN. Lysine 282 bears the N6-acetyllysine mark. An Omega-N-methylarginine modification is found at arginine 373. The segment at 421-459 is disordered; the sequence is EENKAKAEASSGDHPTDTEMKEEQKSNTAGSQSQVETEA. Residues 434–445 show a composition bias toward basic and acidic residues; sequence HPTDTEMKEEQK. The residue at position 436 (threonine 436) is a Phosphothreonine. A Glycyl lysine isopeptide (Lys-Gly) (interchain with G-Cter in SUMO1) cross-link involves residue lysine 441. Over residues 446-459 the composition is skewed to polar residues; it reads SNTAGSQSQVETEA. 2 positions are modified to phosphoserine: serine 451 and serine 453.

As to quaternary structure, homodimer. Interacts with GLMN. Associates with HSP90AA1 and HSP70 in steroid hormone receptor complexes. Also interacts with peroxisomal phytanoyl-CoA alpha-hydroxylase (PHYH). Interacts with NR3C1 and dynein. Interacts with HSF1 in the HSP90 complex. Associates with tubulin. Interacts with MAPT/TAU. Interacts (via TPR domain) with S100A1, S100A2 and S100A6; the interaction is Ca(2+) dependent. Interaction with S100A1 and S100A2 (but not with S100A6) leads to inhibition of FKBP4-HSP90 interaction. Interacts with dynein; causes partially NR3C1 transport to the nucleus. In terms of processing, phosphorylation by CK2 results in loss of HSP90 binding activity. In terms of tissue distribution, widely expressed.

Its subcellular location is the cytoplasm. The protein resides in the cytosol. The protein localises to the mitochondrion. It localises to the nucleus. It is found in the cytoskeleton. Its subcellular location is the cell projection. The protein resides in the axon. It catalyses the reaction [protein]-peptidylproline (omega=180) = [protein]-peptidylproline (omega=0). Its activity is regulated as follows. Inhibited by FK506. Functionally, immunophilin protein with PPIase and co-chaperone activities. Component of steroid receptors heterocomplexes through interaction with heat-shock protein 90 (HSP90). May play a role in the intracellular trafficking of heterooligomeric forms of steroid hormone receptors between cytoplasm and nuclear compartments. The isomerase activity controls neuronal growth cones via regulation of TRPC1 channel opening. Also acts as a regulator of microtubule dynamics by inhibiting MAPT/TAU ability to promote microtubule assembly. May have a protective role against oxidative stress in mitochondria. This Homo sapiens (Human) protein is Peptidyl-prolyl cis-trans isomerase FKBP4 (FKBP4).